The following is a 122-amino-acid chain: Large ribosomal subunit protein uL14 (122 aa).

Belongs to the universal ribosomal protein uL14 family. In terms of assembly, part of the 50S ribosomal subunit. Forms a cluster with proteins L3 and L19. In the 70S ribosome, L14 and L19 interact and together make contacts with the 16S rRNA in bridges B5 and B8.

Binds to 23S rRNA. Forms part of two intersubunit bridges in the 70S ribosome. The chain is Large ribosomal subunit protein uL14 from Novosphingobium aromaticivorans (strain ATCC 700278 / DSM 12444 / CCUG 56034 / CIP 105152 / NBRC 16084 / F199).